A 304-amino-acid polypeptide reads, in one-letter code: PHO85 cyclin-9 (304 aa).

One can recognise a Cyclin N-terminal domain in the interval 19-146 (EMIQFLATST…LLEYLNWDVR (128 aa)).

The protein belongs to the cyclin family. PCL1,2 subfamily. Forms a cyclin-CDK complex with PHO85.

M/G1-specific cyclin partner of the cyclin-dependent kinase (CDK) PHO85. May have a role in bud site selection in G1 phase. This chain is PHO85 cyclin-9 (PCL9), found in Saccharomyces cerevisiae (strain ATCC 204508 / S288c) (Baker's yeast).